Here is a 135-residue protein sequence, read N- to C-terminus: Large ribosomal subunit protein uL16c (135 aa).

This sequence belongs to the universal ribosomal protein uL16 family. Part of the 50S ribosomal subunit.

Its subcellular location is the plastid. This chain is Large ribosomal subunit protein uL16c, found in Epifagus virginiana (Beechdrops).